A 176-amino-acid chain; its full sequence is Siroheme decarboxylase alpha subunit (176 aa).

The segment at 1–24 (MTEAHNACCHPSGTAAGHHGAGKA) is disordered. Residues 12–24 (SGTAAGHHGAGKA) are compositionally biased toward low complexity.

Belongs to the Ahb/Nir family. In terms of assembly, forms a heterodimer composed of AhbA and AhbB. Also forms heterotetramers.

It catalyses the reaction siroheme + 2 H(+) = 12,18-didecarboxysiroheme + 2 CO2. It functions in the pathway porphyrin-containing compound metabolism; protoheme biosynthesis. In terms of biological role, involved in siroheme-dependent heme b biosynthesis. Catalyzes the decarboxylation of siroheme into didecarboxysiroheme. The polypeptide is Siroheme decarboxylase alpha subunit (Nitratidesulfovibrio vulgaris (strain ATCC 29579 / DSM 644 / CCUG 34227 / NCIMB 8303 / VKM B-1760 / Hildenborough) (Desulfovibrio vulgaris)).